Reading from the N-terminus, the 412-residue chain is Phospholipase A1-IIdelta (412 aa).

The residue at position 2 (A2) is an N-acetylalanine. The active-site Acyl-ester intermediate is the S238. Active-site charge relay system residues include S238, D297, and H336.

It belongs to the AB hydrolase superfamily. Lipase family. Expressed in leaves, stems, flowers and siliques, and, at low levels, in seeds and roots (at protein level).

The protein localises to the cytoplasm. Its function is as follows. Acylhydrolase that catalyzes the hydrolysis of phosphatidylcholine (PC) at the sn-1 position. High activity toward PC, medium activity toward monogalactosyldiacylglycerol (MGDG) and low activity toward triacylglycerol (TAG). Confers sensitivity to UV-B radiation probably by deesterifying membrane phospholipids. The chain is Phospholipase A1-IIdelta from Arabidopsis thaliana (Mouse-ear cress).